We begin with the raw amino-acid sequence, 546 residues long: Chaperonin GroEL (546 aa).

ATP contacts are provided by residues 30 to 33 (TLGP), lysine 51, 87 to 91 (DGTTT), glycine 415, 479 to 481 (NAA), and aspartate 495. Residues 526 to 546 (KKGDSAPAGGGMGDMGGMGMM) form a disordered region. The segment covering 533-546 (AGGGMGDMGGMGMM) has biased composition (gly residues).

The protein belongs to the chaperonin (HSP60) family. In terms of assembly, forms a cylinder of 14 subunits composed of two heptameric rings stacked back-to-back. Interacts with the co-chaperonin GroES.

The protein localises to the cytoplasm. It catalyses the reaction ATP + H2O + a folded polypeptide = ADP + phosphate + an unfolded polypeptide.. Its function is as follows. Together with its co-chaperonin GroES, plays an essential role in assisting protein folding. The GroEL-GroES system forms a nano-cage that allows encapsulation of the non-native substrate proteins and provides a physical environment optimized to promote and accelerate protein folding. This is Chaperonin GroEL from Thioalkalivibrio sulfidiphilus (strain HL-EbGR7).